A 217-amino-acid polypeptide reads, in one-letter code: Protein-L-isoaspartate O-methyltransferase (217 aa).

S64 is a catalytic residue.

It belongs to the methyltransferase superfamily. L-isoaspartyl/D-aspartyl protein methyltransferase family.

The protein resides in the cytoplasm. The enzyme catalyses [protein]-L-isoaspartate + S-adenosyl-L-methionine = [protein]-L-isoaspartate alpha-methyl ester + S-adenosyl-L-homocysteine. Its function is as follows. Catalyzes the methyl esterification of L-isoaspartyl residues in peptides and proteins that result from spontaneous decomposition of normal L-aspartyl and L-asparaginyl residues. It plays a role in the repair and/or degradation of damaged proteins. In Rhodopseudomonas palustris (strain BisB5), this protein is Protein-L-isoaspartate O-methyltransferase.